A 529-amino-acid chain; its full sequence is Bifunctional purine biosynthesis protein PurH (529 aa).

The region spanning 1 to 148 (MQQRRPVRRA…KNHKDVAIVV (148 aa)) is the MGS-like domain. An N6-acetyllysine modification is found at Lys287.

This sequence belongs to the PurH family.

The enzyme catalyses (6R)-10-formyltetrahydrofolate + 5-amino-1-(5-phospho-beta-D-ribosyl)imidazole-4-carboxamide = 5-formamido-1-(5-phospho-D-ribosyl)imidazole-4-carboxamide + (6S)-5,6,7,8-tetrahydrofolate. The catalysed reaction is IMP + H2O = 5-formamido-1-(5-phospho-D-ribosyl)imidazole-4-carboxamide. It functions in the pathway purine metabolism; IMP biosynthesis via de novo pathway; 5-formamido-1-(5-phospho-D-ribosyl)imidazole-4-carboxamide from 5-amino-1-(5-phospho-D-ribosyl)imidazole-4-carboxamide (10-formyl THF route): step 1/1. It participates in purine metabolism; IMP biosynthesis via de novo pathway; IMP from 5-formamido-1-(5-phospho-D-ribosyl)imidazole-4-carboxamide: step 1/1. The chain is Bifunctional purine biosynthesis protein PurH from Shigella dysenteriae serotype 1 (strain Sd197).